A 469-amino-acid chain; its full sequence is Neuraminidase (469 aa).

Over 1 to 9 (MNPNQKIIT) the chain is Intravirion. The helical transmembrane segment at 10-30 (IGSVSLTIATVCFLMQIAILV) threads the bilayer. An involved in apical transport and lipid raft association region spans residues 11-33 (GSVSLTIATVCFLMQIAILVTTV). At 31-469 (TTVTLHFKQY…DGADINLMPI (439 aa)) the chain is on the virion surface side. Residues 36–88 (HFKQYECDSPANNQVMPCEPIIIERNITEIVYLTNTTIEKEICPKLVEYRNWS) are hypervariable stalk region. N-linked (GlcNAc...) asparagine; by host glycans are attached at residues asparagine 61, asparagine 70, and asparagine 86. The head of neuraminidase stretch occupies residues 91–469 (QCKITGFAPF…DGADINLMPI (379 aa)). 8 disulfides stabilise this stretch: cysteine 92–cysteine 417, cysteine 124–cysteine 129, cysteine 183–cysteine 230, cysteine 232–cysteine 237, cysteine 278–cysteine 291, cysteine 280–cysteine 289, cysteine 318–cysteine 337, and cysteine 421–cysteine 447. Arginine 118 contacts substrate. N-linked (GlcNAc...) asparagine; by host glycosylation occurs at asparagine 146. Aspartate 151 (proton donor/acceptor) is an active-site residue. Arginine 152 serves as a coordination point for substrate. 2 N-linked (GlcNAc...) asparagine; by host glycosylation sites follow: asparagine 200 and asparagine 234. Substrate is bound at residue 276 to 277 (EE). Arginine 292 lines the substrate pocket. Ca(2+) is bound by residues aspartate 293, glycine 297, and aspartate 324. Positions 326–350 (PRNNDRSSNSNCRNPNNDKGNHGVK) are disordered. The span at 331 to 343 (RSSNSNCRNPNND) shows a compositional bias: low complexity. Arginine 371 provides a ligand contact to substrate. An N-linked (GlcNAc...) asparagine; by host glycan is attached at asparagine 402. Tyrosine 406 acts as the Nucleophile in catalysis.

The protein belongs to the glycosyl hydrolase 34 family. Homotetramer. Ca(2+) is required as a cofactor. In terms of processing, N-glycosylated.

Its subcellular location is the virion membrane. It localises to the host apical cell membrane. The enzyme catalyses Hydrolysis of alpha-(2-&gt;3)-, alpha-(2-&gt;6)-, alpha-(2-&gt;8)- glycosidic linkages of terminal sialic acid residues in oligosaccharides, glycoproteins, glycolipids, colominic acid and synthetic substrates.. Its activity is regulated as follows. Inhibited by the neuraminidase inhibitors zanamivir (Relenza) and oseltamivir (Tamiflu). These drugs interfere with the release of progeny virus from infected cells and are effective against all influenza strains. Resistance to neuraminidase inhibitors is quite rare. Its function is as follows. Catalyzes the removal of terminal sialic acid residues from viral and cellular glycoconjugates. Cleaves off the terminal sialic acids on the glycosylated HA during virus budding to facilitate virus release. Additionally helps virus spread through the circulation by further removing sialic acids from the cell surface. These cleavages prevent self-aggregation and ensure the efficient spread of the progeny virus from cell to cell. Otherwise, infection would be limited to one round of replication. Described as a receptor-destroying enzyme because it cleaves a terminal sialic acid from the cellular receptors. May facilitate viral invasion of the upper airways by cleaving the sialic acid moieties on the mucin of the airway epithelial cells. Likely to plays a role in the budding process through its association with lipid rafts during intracellular transport. May additionally display a raft-association independent effect on budding. Plays a role in the determination of host range restriction on replication and virulence. Sialidase activity in late endosome/lysosome traffic seems to enhance virus replication. This chain is Neuraminidase, found in Aves (whales).